Consider the following 147-residue polypeptide: Large ribosomal subunit protein bL9 (147 aa).

This sequence belongs to the bacterial ribosomal protein bL9 family.

Binds to the 23S rRNA. The sequence is that of Large ribosomal subunit protein bL9 from Clostridium botulinum (strain Alaska E43 / Type E3).